The primary structure comprises 203 residues: Glycerol-3-phosphate acyltransferase (203 aa).

5 helical membrane passes run 13–33 (TLACLVFGYLLGSIPFGLILT), 66–86 (TLLLDALKGTAAAAIASLWGV), 88–108 (AGMAAGLAAFLGHLFPVWLSF), 118–138 (IGVLLGLVPVMVLLFAAAWLA), and 156–176 (IIPVALYATGNGKVALLFAVM).

It belongs to the PlsY family. As to quaternary structure, probably interacts with PlsX.

It is found in the cell inner membrane. It carries out the reaction an acyl phosphate + sn-glycerol 3-phosphate = a 1-acyl-sn-glycero-3-phosphate + phosphate. It functions in the pathway lipid metabolism; phospholipid metabolism. Functionally, catalyzes the transfer of an acyl group from acyl-phosphate (acyl-PO(4)) to glycerol-3-phosphate (G3P) to form lysophosphatidic acid (LPA). This enzyme utilizes acyl-phosphate as fatty acyl donor, but not acyl-CoA or acyl-ACP. The protein is Glycerol-3-phosphate acyltransferase of Sinorhizobium medicae (strain WSM419) (Ensifer medicae).